A 682-amino-acid polypeptide reads, in one-letter code: Tail-specific protease (682 aa).

The signal sequence occupies residues 1–22 (MNTFFRLTALAGLLALAGQSFA). In terms of domain architecture, PDZ spans 238–322 (NTEMSLSLEG…SKVRLEILPA (85 aa)). Catalysis depends on charge relay system residues Ser-452, Asp-463, and Lys-477.

The protein belongs to the peptidase S41A family.

Its subcellular location is the cell inner membrane. The enzyme catalyses The enzyme shows specific recognition of a C-terminal tripeptide, Xaa-Yaa-Zaa, in which Xaa is preferably Ala or Leu, Yaa is preferably Ala or Tyr, and Zaa is preferably Ala, but then cleaves at a variable distance from the C-terminus. A typical cleavage is -Ala-Ala-|-Arg-Ala-Ala-Lys-Glu-Asn-Tyr-Ala-Leu-Ala-Ala.. In terms of biological role, involved in the cleavage of a C-terminal peptide of 11 residues from the precursor form of penicillin-binding protein 3 (PBP3). May be involved in protection of the bacterium from thermal and osmotic stresses. This is Tail-specific protease (prc) from Salmonella typhimurium (strain LT2 / SGSC1412 / ATCC 700720).